The following is a 212-amino-acid chain: Interleukin-6 (212 aa).

The signal sequence occupies residues 1 to 29; it reads MTSFSTSAFRPVAFSLGLLLVMPAAFPAP. Cysteines 72 and 78 form a disulfide. Asn-73 carries an N-linked (GlcNAc...) asparagine glycan. Phosphoserine is present on Ser-81. Cys-101 and Cys-111 are disulfide-bonded. 2 N-linked (GlcNAc...) asparagine glycosylation sites follow: Asn-160 and Asn-172.

This sequence belongs to the IL-6 superfamily. As to quaternary structure, component of a hexamer of two molecules each of IL6, IL6R and IL6ST; first binds to IL6R to associate with the signaling subunit IL6ST. Interacts with IL6R (via the N-terminal ectodomain); this interaction may be affected by IL6R-binding with SORL1, hence decreasing IL6 cis signaling. Interacts with SORL1 (via the N-terminal ectodomain); this interaction leads to IL6 internalization and lysosomal degradation. May form a trimeric complex with the soluble SORL1 ectodomain and soluble IL6R receptor; this interaction might stabilize circulating IL6, hence promoting IL6 trans signaling.

It localises to the secreted. Cytokine with a wide variety of biological functions in immunity, tissue regeneration, and metabolism. Binds to IL6R, then the complex associates to the signaling subunit IL6ST/gp130 to trigger the intracellular IL6-signaling pathway. The interaction with the membrane-bound IL6R and IL6ST stimulates 'classic signaling', whereas the binding of IL6 and soluble IL6R to IL6ST stimulates 'trans-signaling'. Alternatively, 'cluster signaling' occurs when membrane-bound IL6:IL6R complexes on transmitter cells activate IL6ST receptors on neighboring receiver cells. Functionally, IL6 is a potent inducer of the acute phase response. Rapid production of IL6 contributes to host defense during infection and tissue injury, but excessive IL6 synthesis is involved in disease pathology. In the innate immune response, is synthesized by myeloid cells, such as macrophages and dendritic cells, upon recognition of pathogens through toll-like receptors (TLRs) at the site of infection or tissue injury. In the adaptive immune response, is required for the differentiation of B cells into immunoglobulin-secreting cells. Plays a major role in the differentiation of CD4(+) T cell subsets. Essential factor for the development of T follicular helper (Tfh) cells that are required for the induction of germinal-center formation. Required to drive naive CD4(+) T cells to the Th17 lineage. Also required for proliferation of myeloma cells and the survival of plasmablast cells. Its function is as follows. Acts as an essential factor in bone homeostasis and on vessels directly or indirectly by induction of VEGF, resulting in increased angiogenesis activity and vascular permeability. Induces, through 'trans-signaling' and synergistically with IL1B and TNF, the production of VEGF. Involved in metabolic controls, is discharged into the bloodstream after muscle contraction increasing lipolysis and improving insulin resistance. 'Trans-signaling' in central nervous system also regulates energy and glucose homeostasis. Mediates, through GLP-1, crosstalk between insulin-sensitive tissues, intestinal L cells and pancreatic islets to adapt to changes in insulin demand. Also acts as a myokine. Plays a protective role during liver injury, being required for maintenance of tissue regeneration. Also has a pivotal role in iron metabolism by regulating HAMP/hepcidin expression upon inflammation or bacterial infection. Through activation of IL6ST-YAP-NOTCH pathway, induces inflammation-induced epithelial regeneration. In Saimiri sciureus (Common squirrel monkey), this protein is Interleukin-6 (IL6).